A 563-amino-acid chain; its full sequence is MTTQNRFRDNEIRAPQGTQLTAKSWLTEAALRMLMNNLDPDVAENPKELVVYGGIGRAARNWECYDKIVESLINLNDDETLLIQSGKPVGIFKTHSNAPRVLIANSNLVPHWANWEHFNELDAKGLAMYGQMTAGSWIYIGSQGIVQGTYETFVEAGRQHFGGSLKGRWVLTAGLGGMGGAQPLAATLAGACSLNIECQQSRIDFRLKTRYVDEQATDLDDALARIEKYTATGVAVSIALCGNAAEILPELVRRGVRPDMVTDQTSAHDPLNGYLPKGWNWEEYRQRAQHEPALVINAAKISMAEHVEAMLAFHNMGIPTFDYGNNIRQMAHDMGVIRAFDFPGFVPAYIRPLFCRGIGPFRWVALSGNPDDIYKTDAKVKALIPDDAHLHHWLDMARERIRFQGLPARICWVGLGQRAKLGLAFNEMVRSGELSAPVVIGRDHLDSGSVASPNRETEAMQDGSDAVSDWPLLNALLNTASGATWVSLHHGGGVGMGFSQHSGMVVVCDGSDEAAERIARVLHNDPATGVMRHADAGYDIAVNCAQEQGLNLPMVAATQGKKS.

NAD(+)-binding positions include 53–54, Q131, 177–179, E197, R202, 243–244, 264–268, 274–275, and Y323; these read GG, GMG, NA, QTSAH, and YL. C411 is a catalytic residue. G493 serves as a coordination point for NAD(+).

This sequence belongs to the urocanase family. NAD(+) serves as cofactor.

The protein localises to the cytoplasm. The enzyme catalyses 4-imidazolone-5-propanoate = trans-urocanate + H2O. Its pathway is amino-acid degradation; L-histidine degradation into L-glutamate; N-formimidoyl-L-glutamate from L-histidine: step 2/3. Catalyzes the conversion of urocanate to 4-imidazolone-5-propionate. This Yersinia pestis bv. Antiqua (strain Antiqua) protein is Urocanate hydratase.